Reading from the N-terminus, the 464-residue chain is Non-neuronal cytoplasmic intermediate filament protein (464 aa).

Positions 1–14 (MSTQTKKVTRTIIT) are enriched in polar residues. The disordered stretch occupies residues 1-59 (MSTQTKKVTRTIITSSSGGGGGGGGGRASYSSSGRFSGGGGRMRAGGVTSRRSVGSSYS). Residues 1–101 (MSTQTKKVTR…RMTRAHEKQE (101 aa)) form a head region. Positions 17-27 (SGGGGGGGGGR) are enriched in gly residues. The span at 45–59 (AGGVTSRRSVGSSYS) shows a compositional bias: low complexity. The region spanning 98 to 413 (EKQELSHLND…KLLEGEEIRL (316 aa)) is the IF rod domain. The tract at residues 102-133 (LSHLNDRFASYIDKVRYLQERNSKLEAQIKIQ) is coil 1A. The linker 1 stretch occupies residues 134-144 (ESREAPNIKDL). A coil 1B region spans residues 145 to 237 (YEKELRDLRA…FLKRVHDEEI (93 aa)). Residues 238-264 (RQLQDQLNESLTIVEVDSRAASTFAPG) form a linker 2 region. Residues 265–413 (PDLTEALREI…KLLEGEEIRL (149 aa)) form a coil 2 region. The tail stretch occupies residues 414 to 464 (FGESKEGVQQTSSSSSSSYQYSMKSGSGGGGGGSSSGKQQVTVSVSSGEEK). Residues 415–464 (GESKEGVQQTSSSSSSSYQYSMKSGSGGGGGGSSSGKQQVTVSVSSGEEK) are disordered. A compositionally biased stretch (low complexity) spans 420–438 (GVQQTSSSSSSSYQYSMKS). Positions 439-448 (GSGGGGGGSS) are enriched in gly residues. Low complexity predominate over residues 449–464 (SGKQQVTVSVSSGEEK).

It belongs to the intermediate filament family. Can form homopolymers.

Its subcellular location is the cytoplasm. This is Non-neuronal cytoplasmic intermediate filament protein from Branchiostoma lanceolatum (Common lancelet).